A 75-amino-acid chain; its full sequence is Small ribosomal subunit protein bS18 (75 aa).

This sequence belongs to the bacterial ribosomal protein bS18 family. In terms of assembly, part of the 30S ribosomal subunit. Forms a tight heterodimer with protein bS6.

In terms of biological role, binds as a heterodimer with protein bS6 to the central domain of the 16S rRNA, where it helps stabilize the platform of the 30S subunit. This Thermotoga sp. (strain RQ2) protein is Small ribosomal subunit protein bS18.